A 401-amino-acid chain; its full sequence is Ufm1-specific protease 2 (401 aa).

Active-site residues include cysteine 234, aspartate 358, and histidine 360.

This sequence belongs to the peptidase C78 family.

Its subcellular location is the endoplasmic reticulum. The protein localises to the cytoplasm. The protein resides in the nucleus. Thiol-dependent isopeptidase that specifically cleaves UFM1, a ubiquitin-like modifier protein, from conjugated proteins. While it is also able to mediate the processing of UFM1 precursors, a prerequisite for conjugation reactions, ufsp2 mainly acts as a protein deUFMylase that mediates deconjugation of UFM1 from target proteins. This is Ufm1-specific protease 2 from Danio rerio (Zebrafish).